Reading from the N-terminus, the 796-residue chain is Peroxisome proliferator-activated receptor gamma coactivator 1-alpha (796 aa).

An N6-acetyllysine modification is found at Lys77. Residues 98–138 (PVDEDGLPSFDALTDGDVTTDNEASPSSMPDGTPPPQEAEE) form a disordered region. A compositionally biased stretch (polar residues) spans 114-127 (DVTTDNEASPSSMP). An LXXLL motif motif is present at residues 142–146 (LKKLL). Lys144 bears the N6-acetyllysine mark. The residue at position 176 (Thr176) is a Phosphothreonine; by AMPK. An N6-acetyllysine modification is found at Lys182. Positions 211–275 (YLTTNDDPPH…NDPKGSPFEN (65 aa)) are disordered. The span at 217–235 (DPPHTKPTENRNSSRDKCA) shows a compositional bias: basic and acidic residues. Positions 242–258 (TQPQSQHAQAKPTTLSL) are enriched in polar residues. An N6-acetyllysine mark is found at Lys252, Lys269, Lys276, Lys319, Lys345, Lys411, Lys440, and Lys449. The segment at 288 to 350 (GTAGLTPPTT…HSTKKGPEQS (63 aa)) is disordered. The interaction with PPARG stretch occupies residues 291–337 (GLTPPTTPPHKANQDNPFKASPKLKPSCKTVVPPPTKRARYSECSGT). The mediates interaction with RNF34 stretch occupies residues 348-796 (EQSELYAQLS…LKEAQRSLRR (449 aa)). Ser537 is subject to Phosphoserine; by AMPK. 2 disordered regions span residues 541–597 (FNSP…SSRS) and 611–669 (HRNS…QKQK). Basic residues predominate over residues 561–576 (QRMRSRSRSFSRHRSC). The segment covering 577–597 (SRSPYSRSRSRSPGSRSSSRS) has biased composition (low complexity). Positions 620 to 629 (SRSRSPYSRR) are enriched in basic residues. Residues 630-669 (PRYDSYEANEHERLKRDEYRREYEKRESERAKQRERQKQK) show a composition bias toward basic and acidic residues. The 77-residue stretch at 675–751 (RVIYVGKIRP…TDFELYFCGR (77 aa)) folds into the RRM domain. N6-acetyllysine occurs at positions 756 and 777.

In terms of assembly, homooligomer. Interacts with MYBBP1A; inhibits MYBBP1A transcriptional activation. Interacts with PRDM16, LPIN1 and PML. Interacts (via LXXLL motif) with RORA and RORC (via AF-2 motif); activates RORA and RORC transcriptional activation. Interacts with LRPPRC. Interacts with FOXO1. Interacts with NR5A2. In terms of processing, phosphorylation by AMPK in skeletal muscle increases activation of its own promoter. Phosphorylated by CLK2. Post-translationally, heavily acetylated by KAT2A/GCN5 under conditions of high nutrients, leading to inactivation of PPARGC1A. Deacetylated by SIRT1 in low nutrients/high NAD conditions, leading to its activation. Ubiquitinated. Ubiquitination by RNF34 induces proteasomal degradation.

Its subcellular location is the nucleus. The protein localises to the PML body. Transcriptional coactivator for steroid receptors and nuclear receptors. Greatly increases the transcriptional activity of PPARG and thyroid hormone receptor on the uncoupling protein promoter. Can regulate key mitochondrial genes that contribute to the program of adaptive thermogenesis. Plays an essential role in metabolic reprogramming in response to dietary availability through coordination of the expression of a wide array of genes involved in glucose and fatty acid metabolism. Acts as a key regulator of gluconeogenesis: stimulates hepatic gluconeogenesis by increasing the expression of gluconeogenic enzymes, and acting together with FOXO1 to promote the fasting gluconeogenic program. Induces the expression of PERM1 in the skeletal muscle in an ESRRA-dependent manner. Also involved in the integration of the circadian rhythms and energy metabolism. Required for oscillatory expression of clock genes, such as BMAL1 and NR1D1, through the coactivation of RORA and RORC, and metabolic genes, such as PDK4 and PEPCK. The polypeptide is Peroxisome proliferator-activated receptor gamma coactivator 1-alpha (Ppargc1a) (Rattus norvegicus (Rat)).